The primary structure comprises 388 residues: Chorismate synthase (388 aa).

NADP(+) contacts are provided by arginine 39 and arginine 45. Residues 130–132, 251–252, glycine 296, 311–315, and arginine 337 contribute to the FMN site; these read RSS, NA, and KPIPT.

Belongs to the chorismate synthase family. Homotetramer. The cofactor is FMNH2.

The catalysed reaction is 5-O-(1-carboxyvinyl)-3-phosphoshikimate = chorismate + phosphate. It functions in the pathway metabolic intermediate biosynthesis; chorismate biosynthesis; chorismate from D-erythrose 4-phosphate and phosphoenolpyruvate: step 7/7. Its function is as follows. Catalyzes the anti-1,4-elimination of the C-3 phosphate and the C-6 proR hydrogen from 5-enolpyruvylshikimate-3-phosphate (EPSP) to yield chorismate, which is the branch point compound that serves as the starting substrate for the three terminal pathways of aromatic amino acid biosynthesis. This reaction introduces a second double bond into the aromatic ring system. The polypeptide is Chorismate synthase (Lactococcus lactis subsp. lactis (strain IL1403) (Streptococcus lactis)).